Reading from the N-terminus, the 607-residue chain is Nexilin (607 aa).

Positions 1–14 (MNDVSQKAEIKEML) are enriched in basic and acidic residues. Disordered regions lie at residues 1 to 143 (MNDV…EDKM) and 165 to 268 (ETEA…RRRI). Serine 16 is modified (phosphoserine). 4 stretches are compositionally biased toward basic and acidic residues: residues 40 to 85 (GKFD…RAEQ), 120 to 143 (KTKD…EDKM), 167 to 221 (EAKK…HMVN), and 228 to 268 (DRET…RRRI). Position 172 is a phosphoserine (serine 172). Phosphoserine occurs at positions 281, 288, and 296. At threonine 301 the chain carries Phosphothreonine. Disordered stretches follow at residues 419–444 (NFHE…KVNM) and 480–514 (AALQ…GAPW). Phosphoserine occurs at positions 495 and 500. At threonine 502 the chain carries Phosphothreonine. Positions 513 to 601 (PWFKKPLRNT…GSAASTCILT (89 aa)) constitute an Ig-like domain.

As to quaternary structure, interacts with F-actin.

The protein localises to the cytoplasm. It is found in the cytoskeleton. It localises to the cell junction. Its subcellular location is the adherens junction. The protein resides in the myofibril. The protein localises to the sarcomere. It is found in the z line. Involved in regulating cell migration through association with the actin cytoskeleton. Has an essential role in the maintenance of Z line and sarcomere integrity. The sequence is that of Nexilin from Mus musculus (Mouse).